The sequence spans 311 residues: Porphobilinogen deaminase (311 aa).

Cys-241 carries the S-(dipyrrolylmethanemethyl)cysteine modification.

This sequence belongs to the HMBS family. Monomer. The cofactor is dipyrromethane.

The catalysed reaction is 4 porphobilinogen + H2O = hydroxymethylbilane + 4 NH4(+). The protein operates within porphyrin-containing compound metabolism; protoporphyrin-IX biosynthesis; coproporphyrinogen-III from 5-aminolevulinate: step 2/4. In terms of biological role, tetrapolymerization of the monopyrrole PBG into the hydroxymethylbilane pre-uroporphyrinogen in several discrete steps. This Halalkalibacterium halodurans (strain ATCC BAA-125 / DSM 18197 / FERM 7344 / JCM 9153 / C-125) (Bacillus halodurans) protein is Porphobilinogen deaminase (hemC).